We begin with the raw amino-acid sequence, 196 residues long: Probable malonic semialdehyde reductase RutE (196 aa).

It belongs to the nitroreductase family. HadB/RutE subfamily. It depends on FMN as a cofactor.

It carries out the reaction 3-hydroxypropanoate + NADP(+) = 3-oxopropanoate + NADPH + H(+). May reduce toxic product malonic semialdehyde to 3-hydroxypropionic acid, which is excreted. This Escherichia coli O6:H1 (strain CFT073 / ATCC 700928 / UPEC) protein is Probable malonic semialdehyde reductase RutE.